The following is a 540-amino-acid chain: Keratin, type II cytoskeletal 73 (540 aa).

A head region spans residues 1–131 (MSRQFTYKSG…DPEIQKVCAQ (131 aa)). Residues 132–167 (EREQIKALNNKFASFIDKVRFLEQQNQVLGTKWELL) form a coil 1A region. Residues 132 to 445 (EREQIKALNN…KLLEGEECRM (314 aa)) enclose the IF rod domain. A linker 1 region spans residues 168 to 186 (QQQDLDNCKNNLEPILEGY). A coil 1B region spans residues 187–278 (ISNLRKQLEM…CLYEGEIAQM (92 aa)). A linker 12 region spans residues 279 to 302 (QSHISDTSVILSMDNNRNLDLNSI). The tract at residues 303-441 (IAEVRAQYED…ATYRKLLEGE (139 aa)) is coil 2. The segment at 442–540 (ECRMSGEYTN…LSSPTKKTPR (99 aa)) is tail. A disordered region spans residues 509-540 (GEAKTRLGSTSEIKDLLGKTPALSSPTKKTPR). A compositionally biased stretch (polar residues) spans 530–540 (ALSSPTKKTPR).

It belongs to the intermediate filament family. As to quaternary structure, heterotetramer of two type I and two type II keratins.

Has a role in hair formation. Specific component of keratin intermediate filaments in the inner root sheath (IRS) of the hair follicle. The chain is Keratin, type II cytoskeletal 73 (KRT73) from Bos taurus (Bovine).